The chain runs to 106 residues: MMKVLVVVALLVTLISYSSSEGIDDLEADELLSLMANEQTRAKACTPRYYDCSHDRHSCCRSSMFKDVCTCFYPEGGDNKEVCTCQQPKHLKYMEKATDKIKNLFG.

The N-terminal stretch at 1–20 is a signal peptide; it reads MMKVLVVVALLVTLISYSSS. Residues 21–41 constitute a propeptide that is removed on maturation; the sequence is EGIDDLEADELLSLMANEQTR. 4 cysteine pairs are disulfide-bonded: cysteine 45-cysteine 60, cysteine 52-cysteine 69, cysteine 59-cysteine 85, and cysteine 71-cysteine 83.

It belongs to the neurotoxin 19 (CSTX) family. 02 (D7) subfamily. As to expression, expressed by the venom gland.

The protein localises to the secreted. This chain is Toxin-like structure LSTX-D3, found in Lycosa singoriensis (Wolf spider).